Reading from the N-terminus, the 503-residue chain is Probable cytosol aminopeptidase (503 aa).

2 residues coordinate Mn(2+): lysine 270 and aspartate 275. Lysine 282 is a catalytic residue. Mn(2+) contacts are provided by aspartate 293, aspartate 352, and glutamate 354. The active site involves arginine 356.

It belongs to the peptidase M17 family. Mn(2+) is required as a cofactor.

The protein resides in the cytoplasm. The enzyme catalyses Release of an N-terminal amino acid, Xaa-|-Yaa-, in which Xaa is preferably Leu, but may be other amino acids including Pro although not Arg or Lys, and Yaa may be Pro. Amino acid amides and methyl esters are also readily hydrolyzed, but rates on arylamides are exceedingly low.. The catalysed reaction is Release of an N-terminal amino acid, preferentially leucine, but not glutamic or aspartic acids.. In terms of biological role, presumably involved in the processing and regular turnover of intracellular proteins. Catalyzes the removal of unsubstituted N-terminal amino acids from various peptides. The polypeptide is Probable cytosol aminopeptidase (Citrobacter koseri (strain ATCC BAA-895 / CDC 4225-83 / SGSC4696)).